A 95-amino-acid chain; its full sequence is Aspartyl/glutamyl-tRNA(Asn/Gln) amidotransferase subunit C (95 aa).

Belongs to the GatC family. In terms of assembly, heterotrimer of A, B and C subunits.

The catalysed reaction is L-glutamyl-tRNA(Gln) + L-glutamine + ATP + H2O = L-glutaminyl-tRNA(Gln) + L-glutamate + ADP + phosphate + H(+). It carries out the reaction L-aspartyl-tRNA(Asn) + L-glutamine + ATP + H2O = L-asparaginyl-tRNA(Asn) + L-glutamate + ADP + phosphate + 2 H(+). Functionally, allows the formation of correctly charged Asn-tRNA(Asn) or Gln-tRNA(Gln) through the transamidation of misacylated Asp-tRNA(Asn) or Glu-tRNA(Gln) in organisms which lack either or both of asparaginyl-tRNA or glutaminyl-tRNA synthetases. The reaction takes place in the presence of glutamine and ATP through an activated phospho-Asp-tRNA(Asn) or phospho-Glu-tRNA(Gln). The chain is Aspartyl/glutamyl-tRNA(Asn/Gln) amidotransferase subunit C from Thioalkalivibrio sulfidiphilus (strain HL-EbGR7).